The chain runs to 142 residues: MAVRMTVILPLAMALICLMQAEPATAANNHIRTVLKLFRTIDLDDSKKSFYLTAAKYGIQTQLREPIIRIVGGYLPSTKLSEACVKNMISEVYEIEGDFYSKFSYACEDHAPYSVECLEDARDDYLTQLVELFKETKKCLRE.

The first 26 residues, 1 to 26 (MAVRMTVILPLAMALICLMQAEPATA), serve as a signal peptide directing secretion. Cystine bridges form between Cys84–Cys139 and Cys107–Cys117.

Associates with activated host C3-convertase complex C3bBb (C3-CFB). Interacts with host properdin (CFP), a regulator of the alternate pathway of complement. In terms of tissue distribution, female salivary gland (at protein level).

Its subcellular location is the secreted. Functionally, salivary protein that potently inhibits the alternative pathway of complement system activation in the host while having no inhibitory effect on the classical or lectin pathways. Binds and stabilizes activated host C3-convertase complex C3bBb (C3-CFB) and inhibits its convertase activity. Enhances accumulation of C3bBb on immobilized properdin. The chain is gSG7 salivary protein from Anopheles albimanus (New world malaria mosquito).